A 297-amino-acid chain; its full sequence is Formylmethanofuran--tetrahydromethanopterin formyltransferase-like protein (297 aa).

This sequence belongs to the FTR family.

The polypeptide is Formylmethanofuran--tetrahydromethanopterin formyltransferase-like protein (ehaS) (Methanothermobacter thermautotrophicus (strain ATCC 29096 / DSM 1053 / JCM 10044 / NBRC 100330 / Delta H) (Methanobacterium thermoautotrophicum)).